The following is a 103-amino-acid chain: V-type sodium ATPase subunit G (103 aa).

It belongs to the V-ATPase F subunit family.

In terms of biological role, involved in ATP-driven sodium extrusion. The chain is V-type sodium ATPase subunit G (ntpG) from Enterococcus hirae (strain ATCC 9790 / DSM 20160 / JCM 8729 / LMG 6399 / NBRC 3181 / NCIMB 6459 / NCDO 1258 / NCTC 12367 / WDCM 00089 / R).